Reading from the N-terminus, the 319-residue chain is D-alanine--D-alanine ligase (319 aa).

The 196-residue stretch at 120–315 (KRVLAQAGVP…YPELLRRLVE (196 aa)) folds into the ATP-grasp domain. 147-198 (DPPFFVKPANTGSSVGISRVERFQDLEAALALAFRYDEKAVVEKALSPVREL) lines the ATP pocket. Positions 270, 282, and 284 each coordinate Mg(2+).

It belongs to the D-alanine--D-alanine ligase family. It depends on Mg(2+) as a cofactor. Mn(2+) is required as a cofactor.

It localises to the cytoplasm. The catalysed reaction is 2 D-alanine + ATP = D-alanyl-D-alanine + ADP + phosphate + H(+). Its pathway is cell wall biogenesis; peptidoglycan biosynthesis. Functionally, cell wall formation. The polypeptide is D-alanine--D-alanine ligase (Thermus thermophilus (strain ATCC 27634 / DSM 579 / HB8)).